The primary structure comprises 327 residues: MSENTRKVTVAVIGSGNIGTDLMIKVIRHSDVLQMGAMVGIDPDSDGLARARRLGVPTTAVGVHGLLELPNFDEIDVVFDATSAKAHAANAALLEPLGKRLIDLTPAALGPFVVPAVNLDEHRHAANVNMVTCGGQATIPIVAAVSRVTPVAYAEIVASIASKSAGPGTRANIDEFTETTSHAIETVGGARRGKAIIVLNPADPPLIMRDTVLCLISARDPATHDAIRNSIQAMVEHVATYVPGYRLKQQVQITPVPDGQPVHTLLASGDTAAPTHQVSVFLEVEGAAHYLPAYAGNLDIMTSAAVRYAESVADTIAAPAATQGATR.

15–18 (SGNI) contacts NAD(+). The Acyl-thioester intermediate role is filled by Cys133. NAD(+)-binding positions include 164-172 (SAGPGTRAN) and Asn297.

The protein belongs to the acetaldehyde dehydrogenase family.

It catalyses the reaction acetaldehyde + NAD(+) + CoA = acetyl-CoA + NADH + H(+). The chain is Acetaldehyde dehydrogenase 6 from Rhodococcus opacus (strain B4).